Here is a 307-residue protein sequence, read N- to C-terminus: MLQTPESRGLPVPQAEGEKDGGHDGETRAPTASQERPKEELGAGREEGAAEPALTRKGARALAAKALARRRAYRRLNRTVAELVQFLLVKDKKKSPITRSEMVKYVIGDLKILFPDIIARAAEHLRYVFGFELKQFDRKHHTYILINKLKPLEEEEEEDLGGDGPRLGLLMMILGLIYMRGNSAREAQVWEMLRRLGVQPSKYHFLFGYPKRLIMEDFVQQRYLSYRRVPHTNPPEYEFSWGPRSNLEISKMEVLGFVAKLHKKEPQHWPVQYREALADEADRARAKARAEASMRARASARAGIHLW.

Residues 1–55 form a disordered region; it reads MLQTPESRGLPVPQAEGEKDGGHDGETRAPTASQERPKEELGAGREEGAAEPALT. Composition is skewed to basic and acidic residues over residues 16–27 and 35–48; these read EGEKDGGHDGET and ERPK…REEG. Residues 76-277 enclose the MAGE domain; that stretch reads LNRTVAELVQ…HWPVQYREAL (202 aa).

In terms of assembly, interacts (via MAGE domain) with RING-type zinc finger-containing E3 ubiquitin-protein ligases LNX1, TRIM27 and NSMCE1; the interaction is direct. In terms of tissue distribution, ubiquitous.

Functionally, enhances ubiquitin ligase activity of RING-type zinc finger-containing E3 ubiquitin ligases. Proposed to act through recruitment and/or stabilization of the E2 ubiquitin-conjugating enzyme at the E3:substrate complex. MAGEF1-NSMCE1 ubiquitin ligase complex promotes proteasomal degradation of MMS19, a key component of the cytosolic iron-sulfur protein assembly (CIA) machinery. Down-regulation of MMS19 impairs the activity of several DNA repair and metabolism enzymes such as ERCC2/XPD, FANCJ, RTEL1 and POLD1 that require iron-sulfur clusters as cofactors. May negatively regulate genome integrity by inhibiting homologous recombination-mediated double-strand break DNA repair. In Homo sapiens (Human), this protein is Melanoma-associated antigen F1.